The sequence spans 106 residues: Putative double-stranded DNA mimic protein VP1949 (106 aa).

It belongs to the putative dsDNA mimic protein family.

Its function is as follows. May act as a double-stranded DNA (dsDNA) mimic. Probably regulates the activity of a dsDNA-binding protein. The sequence is that of Putative double-stranded DNA mimic protein VP1949 from Vibrio parahaemolyticus serotype O3:K6 (strain RIMD 2210633).